A 430-amino-acid chain; its full sequence is Phosphoglucosamine mutase (430 aa).

Ser93 functions as the Phosphoserine intermediate in the catalytic mechanism. Mg(2+) contacts are provided by Ser93, Asp227, Asp229, and Asp231. Position 93 is a phosphoserine (Ser93).

Belongs to the phosphohexose mutase family. Requires Mg(2+) as cofactor. Activated by phosphorylation.

The catalysed reaction is alpha-D-glucosamine 1-phosphate = D-glucosamine 6-phosphate. Catalyzes the conversion of glucosamine-6-phosphate to glucosamine-1-phosphate. The protein is Phosphoglucosamine mutase of Thermosipho africanus (strain TCF52B).